The chain runs to 375 residues: Trans-enoyl reductase BOA5 (375 aa).

Residues 1–16 (MQAVIQTGPGTLQLTE) show a composition bias toward polar residues. The disordered stretch occupies residues 1-21 (MQAVIQTGPGTLQLTENVPKP). 42–45 (SDWK) is an NADP(+) binding site. Position 121-128 (121-128 (VGIVTTGL)) interacts with substrate. Positions 147-168 (GSAAPQKTRVGPRGWSGGDALT) are disordered. NADP(+)-binding positions include 185 to 188 (STST), 208 to 211 (SPHN), Y226, and 273 to 274 (LD). 294–298 (ALTIF) contacts substrate. 363–364 (VS) lines the NADP(+) pocket.

It belongs to the zinc-containing alcohol dehydrogenase family. In terms of assembly, monomer.

Its pathway is polyketide biosynthesis. In terms of biological role, trans-enoyl reductase; part of the gene cluster A that mediates the biosynthesis of botcinic acid and its botcinin derivatives, acetate-derived polyketides that contribute to virulence when combined with the sesquiterpene botrydial. Botcinic acid and its derivatives have been shown to induce chlorosis and necrosis during host plant infection, but also have antifungal activities. Two polyketide synthases, BOA6 and BOA9, are involved in the biosynthesis of botcinins. BOA6 mediates the formation of the per-methylated tetraketide core by condensation of four units of malonyl-CoA with one unit of acetyl-CoA, which would be methylated in activated methylene groups to yield a bicyclic acid intermediate that could then either be converted to botrylactone derivatives or lose the starter acetate unit through a retro-Claisen type C-C bond cleavage to yield botcinin derivatives. The second polyketide synthase, BOA9, is probably required for the biosynthesis of the tetraketide side chain of botcinins. The methyltransferase (MT) domain within BOA6 is probably responsible for the incorporation of four methyl groups. The trans-enoyl reductase BOA5 might take over the enoyl reductase function of BOA6 that misses an ER domain. The monooxygenases BOA2, BOA3 and BOA4 might be involved in further hydroxylations at C4, C5 and C8, whereas BOA7, close to BOA9, could potentially be involved in the hydroxylation at C4 in the side chain of botcinins. In Botryotinia fuckeliana (strain B05.10) (Noble rot fungus), this protein is Trans-enoyl reductase BOA5.